Here is a 666-residue protein sequence, read N- to C-terminus: Nuclear distribution protein nudE homolog 1 (666 aa).

The stretch at 14-195 (EEEIAHYREK…KDQLARAIAT (182 aa)) forms a coiled coil. 4 disordered regions span residues 40-64 (EFQQSSKELEDEMEQELAANDKQQA), 220-310 (DDIN…SGIP), 369-388 (KRVTSTTSTTSSTTTAPAPH), and 397-666 (DHNT…KVKK). Polar residues predominate over residues 251 to 274 (RSGTMSSIPVASPSTKRFSQQIPH). Low complexity-rich tracts occupy residues 275–287 (SPSFSTLSRSTTS) and 372–383 (TSTTSTTSSTTT). Residues 400–410 (TTPTAQSQQFP) show a composition bias toward polar residues. 3 stretches are compositionally biased toward low complexity: residues 449–465 (PTFRSSSTTSNRSLPSR), 473–485 (ASGSARSTTSGTA), and 536–554 (SATPTSGFSSFSASASTSN). Composition is skewed to polar residues over residues 587–599 (RQSLSGAGPTPTT) and 614–638 (SSLSNMDKPSLMSASPGSRTPSGRP).

This sequence belongs to the nudE family. Self-associates. Interacts with PAC1.

It localises to the cytoplasm. It is found in the cytoskeleton. In terms of biological role, required for nuclear migration. The sequence is that of Nuclear distribution protein nudE homolog 1 (NDE1) from Cryptococcus neoformans var. neoformans serotype D (strain B-3501A) (Filobasidiella neoformans).